The following is a 457-amino-acid chain: Reticulon-like protein B18 (457 aa).

The segment at 94–183 (AAVTARRSKT…SPSSDQPQDV (90 aa)) is disordered. Positions 124–136 (LRSEAMVDTKENT) are enriched in basic and acidic residues. Positions 149 to 163 (NQRKQKKLGRSKKEK) are enriched in basic residues. Residues 166–183 (SVPLLASPSPSSDQPQDV) are compositionally biased toward low complexity. The Reticulon domain maps to 195 to 385 (ISDLIMWRDV…AFWNLTSLKT (191 aa)). Helical transmembrane passes span 208–228 (TLWF…AKGF), 230–250 (FSVF…SFLS), 314–334 (YGYL…SFTI), and 377–397 (FWNL…VVVI). The segment at 407–457 (DSEDEEEKKQQEKTHPEQQKSPEDKSTSPRSAEEEQALVLVAETKAPKKLY) is disordered. Residues 413-439 (EKKQQEKTHPEQQKSPEDKSTSPRSAE) are compositionally biased toward basic and acidic residues.

It is found in the endoplasmic reticulum membrane. The sequence is that of Reticulon-like protein B18 (RTNLB18) from Arabidopsis thaliana (Mouse-ear cress).